We begin with the raw amino-acid sequence, 145 residues long: Cystatin-like 1 (145 aa).

An N-terminal signal peptide occupies residues 1-19 (MGIGCWRNPLLLLIALVLS). A Cystatin domain is found at 37-115 (SKKNMNSTLN…KKLRKSLICE (79 aa)). N-linked (GlcNAc...) asparagine glycosylation is present at Asn-42. Intrachain disulfides connect Cys-91–Cys-101 and Cys-114–Cys-134.

Belongs to the cystatin family.

It localises to the secreted. This Homo sapiens (Human) protein is Cystatin-like 1 (CSTL1).